Consider the following 183-residue polypeptide: Apo-citrate lyase phosphoribosyl-dephospho-CoA transferase (183 aa).

Belongs to the CitX family.

It catalyses the reaction apo-[citrate lyase ACP] + 2'-(5''-triphospho-alpha-D-ribosyl)-3'-dephospho-CoA = holo-[citrate lyase ACP] + diphosphate. In terms of biological role, transfers 2-(5''-triphosphoribosyl)-3'-dephosphocoenzyme-A on a serine residue to the apo-acyl carrier protein (gamma chain) of the citrate lyase to yield holo-acyl carrier protein. The sequence is that of Apo-citrate lyase phosphoribosyl-dephospho-CoA transferase from Escherichia coli O6:K15:H31 (strain 536 / UPEC).